The sequence spans 429 residues: Stromal membrane-associated protein 2 (429 aa).

The Arf-GAP domain maps to 13-137 (QAVLANLLLE…LDINAFRKEK (125 aa)). A C4-type zinc finger spans residues 28 to 51 (CADCQSKGPRWASWNIGVFICIRC). Position 127 is a phosphoserine (Ser127). Over residues 138-172 (DNKWKRGSEPAPEKKMEPVVFEKVKMPQKKEDPQL) the composition is skewed to basic and acidic residues. Disordered stretches follow at residues 138-181 (DNKW…PKSK) and 217-263 (VSSP…KKQL). The interval 163–232 (MPQKKEDPQL…SVSRKVVGSM (70 aa)) is interaction with clathrin heavy chains. Positions 217 to 231 (VSSPSSSVSRKVVGS) are enriched in low complexity. Residues Ser219, Ser223, Ser225, Ser231, and Ser240 each carry the phosphoserine modification. Positions 253–263 (SKSEETSKKQL) are enriched in basic and acidic residues. The interval 340-429 (MGGMQASMMG…NQTLSPQMWK (90 aa)) is interaction with PICALM.

As to quaternary structure, interacts with ARF1. Interacts with PICALM and clathrin heavy chains.

The protein localises to the cytoplasm. Functionally, GTPase activating protein that acts on ARF1. Can also activate ARF6 (in vitro). May play a role in clathrin-dependent retrograde transport from early endosomes to the trans-Golgi network. The protein is Stromal membrane-associated protein 2 (SMAP2) of Bos taurus (Bovine).